Reading from the N-terminus, the 370-residue chain is Cobalt-precorrin-5B C(1)-methyltransferase (370 aa).

The protein belongs to the CbiD family.

The enzyme catalyses Co-precorrin-5B + S-adenosyl-L-methionine = Co-precorrin-6A + S-adenosyl-L-homocysteine. It functions in the pathway cofactor biosynthesis; adenosylcobalamin biosynthesis; cob(II)yrinate a,c-diamide from sirohydrochlorin (anaerobic route): step 6/10. Its function is as follows. Catalyzes the methylation of C-1 in cobalt-precorrin-5B to form cobalt-precorrin-6A. The protein is Cobalt-precorrin-5B C(1)-methyltransferase of Pseudomonas syringae pv. syringae (strain B728a).